A 115-amino-acid chain; its full sequence is Chaperone protein PrsD (115 aa).

The protein belongs to the periplasmic pilus chaperone family.

It is found in the periplasm. Its function is as follows. Mediates assembly of pili by forming soluble multimeric complexes with pili subunits as an intermediate step in the assembly process. The polypeptide is Chaperone protein PrsD (prsD) (Escherichia coli).